Consider the following 344-residue polypeptide: Arginine N-succinyltransferase (344 aa).

L125 is a binding site for succinyl-CoA. Residue H229 is the Proton donor of the active site.

This sequence belongs to the arginine N-succinyltransferase family.

The enzyme catalyses succinyl-CoA + L-arginine = N(2)-succinyl-L-arginine + CoA + H(+). Its pathway is amino-acid degradation; L-arginine degradation via AST pathway; L-glutamate and succinate from L-arginine: step 1/5. Functionally, catalyzes the transfer of succinyl-CoA to arginine to produce N(2)-succinylarginine. In Shigella sonnei (strain Ss046), this protein is Arginine N-succinyltransferase.